The sequence spans 135 residues: Galectin-1 (135 aa).

At Ala-2 the chain carries N-acetylalanine. Residues 4–135 form the Galectin domain; that stretch reads GLVASNLNLK…DFKIKCVAFE (132 aa). Residues Lys-13, Lys-19, and Lys-29 each carry the N6-acetyllysine modification. The residue at position 30 (Ser-30) is a Phosphoserine. A beta-D-galactoside is bound by residues 45 to 49, His-53, Asn-62, and 69 to 72; these read HFNPR and WGTE. The residue at position 108 (Lys-108) is an N6-acetyllysine; alternate. N6-succinyllysine; alternate is present on Lys-108. Lys-128 is modified (N6-acetyllysine).

In terms of assembly, homodimer. Binds LGALS3BP. Interacts with CD2, CD3, CD4, CD6, CD7, CD43, ALCAM and CD45. Interacts with laminin (via poly-N-acetyllactosamine). Interacts with SUSD2. Interacts with cargo receptor TMED10; the interaction mediates the translocation from the cytoplasm into the ERGIC (endoplasmic reticulum-Golgi intermediate compartment) and thereby secretion. Interacts with CD69.

Its subcellular location is the secreted. The protein resides in the extracellular space. The protein localises to the extracellular matrix. It is found in the cytoplasm. Lectin that binds beta-galactoside and a wide array of complex carbohydrates. Plays a role in regulating apoptosis, cell proliferation and cell differentiation. Inhibits CD45 protein phosphatase activity and therefore the dephosphorylation of Lyn kinase. Strong inducer of T-cell apoptosis. Plays a negative role in Th17 cell differentiation via activation of the receptor CD69. The protein is Galectin-1 (Lgals1) of Rattus norvegicus (Rat).